A 150-amino-acid chain; its full sequence is Large ribosomal subunit protein bL9 (150 aa).

The protein belongs to the bacterial ribosomal protein bL9 family.

Functionally, binds to the 23S rRNA. The protein is Large ribosomal subunit protein bL9 of Thioalkalivibrio sulfidiphilus (strain HL-EbGR7).